Reading from the N-terminus, the 938-residue chain is Microperfuranone synthase (938 aa).

Positions 44–445 are adenylation (A) domain; sequence TSTRISYAEL…AGRTKDTIIV (402 aa). One can recognise a Carrier domain in the interval 579-655; the sequence is SDSERAVQKA…AIARSIDSSR (77 aa). The tract at residues 581 to 652 is thiolation and peptide carrier (T) domain; it reads SERAVQKALV…TPGAIARSID (72 aa). Position 613 is an O-(pantetheine 4'-phosphoryl)serine (S613). The thioesterase (TE) domain stretch occupies residues 676 to 923; the sequence is PLFCIHPGSG…AKMLNREHIA (248 aa). Residue S746 is part of the active site.

Belongs to the ATP-dependent AMP-binding enzyme family.

It participates in secondary metabolite biosynthesis. Functionally, microperfuranone synthase is the only protein required for the biosynthesis of the secondary metabolite microperfuranone from phenylpyruvic acid (PPA). Several steps for the microperfuranione biosynthesis have been proposed. These steps include the activation of PPA, by the micA adenylation (A) domain to AMP-phenylpyruvic acid followed by loading of the PPA unit to the thiolation and peptide carrier (T) domain and eventually transferring to the thioesterase (TE) domain. After loading another PPA unit onto the T domain, aldol condensation establishes the carbon-carbon bond between the alpha- and beta-carbon of the two PPA units. Sulfur-assisted furan ring formation, TE domain mediated hydrolysis, decarboxylation, and keto-enol tautomerization would generate microperfuranone attached to the T domain. Finally, microperfuranone is released by the TE domain. This is Microperfuranone synthase from Emericella nidulans (strain FGSC A4 / ATCC 38163 / CBS 112.46 / NRRL 194 / M139) (Aspergillus nidulans).